The following is a 230-amino-acid chain: Oxaloacetate tautomerase FAHD1, mitochondrial (230 aa).

Residues 1-26 (MAAAAAAAAQRLLAASTKIIGVGRNY) constitute a mitochondrion transit peptide. 3 residues coordinate Mg(2+): Glu73, Glu75, and Asp104.

It belongs to the FAH family. Mg(2+) is required as a cofactor. Requires Mn(2+) as cofactor.

It localises to the mitochondrion. The catalysed reaction is oxaloacetate = enol-oxaloacetate. Tautomerase that converts enol-oxaloacetate, a strong inhibitor of succinate dehydrogenase, to the physiological keto form of oxaloacetate. This chain is Oxaloacetate tautomerase FAHD1, mitochondrial, found in Oryza sativa subsp. japonica (Rice).